A 157-amino-acid chain; its full sequence is Transcription antitermination protein NusB (157 aa).

Belongs to the NusB family.

In terms of biological role, involved in transcription antitermination. Required for transcription of ribosomal RNA (rRNA) genes. Binds specifically to the boxA antiterminator sequence of the ribosomal RNA (rrn) operons. This is Transcription antitermination protein NusB from Helicobacter hepaticus (strain ATCC 51449 / 3B1).